A 79-amino-acid polypeptide reads, in one-letter code: Large ribosomal subunit protein uL24 (79 aa).

Belongs to the universal ribosomal protein uL24 family. As to quaternary structure, part of the 50S ribosomal subunit.

One of two assembly initiator proteins, it binds directly to the 5'-end of the 23S rRNA, where it nucleates assembly of the 50S subunit. Its function is as follows. One of the proteins that surrounds the polypeptide exit tunnel on the outside of the subunit. The sequence is that of Large ribosomal subunit protein uL24 from Lactobacillus johnsonii (strain CNCM I-12250 / La1 / NCC 533).